Here is a 313-residue protein sequence, read N- to C-terminus: tRNA dimethylallyltransferase (313 aa).

11–18 (GPTAAGKS) is an ATP binding site. 13 to 18 (TAAGKS) contacts substrate. Interaction with substrate tRNA regions lie at residues 36-39 (DSAT), 160-164 (QRIQR), and 244-249 (RCVGYR).

This sequence belongs to the IPP transferase family. In terms of assembly, monomer. The cofactor is Mg(2+).

The enzyme catalyses adenosine(37) in tRNA + dimethylallyl diphosphate = N(6)-dimethylallyladenosine(37) in tRNA + diphosphate. Its function is as follows. Catalyzes the transfer of a dimethylallyl group onto the adenine at position 37 in tRNAs that read codons beginning with uridine, leading to the formation of N6-(dimethylallyl)adenosine (i(6)A). The chain is tRNA dimethylallyltransferase from Bordetella parapertussis (strain 12822 / ATCC BAA-587 / NCTC 13253).